The chain runs to 175 residues: Shikimate kinase (175 aa).

Residue 14-19 (GAGKST) coordinates ATP. A Mg(2+)-binding site is contributed by S18. Positions 36, 60, and 82 each coordinate substrate. Position 120 (R120) interacts with ATP. R140 contributes to the substrate binding site. ATP is bound at residue Q157.

It belongs to the shikimate kinase family. Monomer. The cofactor is Mg(2+).

It is found in the cytoplasm. The enzyme catalyses shikimate + ATP = 3-phosphoshikimate + ADP + H(+). The protein operates within metabolic intermediate biosynthesis; chorismate biosynthesis; chorismate from D-erythrose 4-phosphate and phosphoenolpyruvate: step 5/7. Functionally, catalyzes the specific phosphorylation of the 3-hydroxyl group of shikimic acid using ATP as a cosubstrate. The chain is Shikimate kinase from Actinobacillus succinogenes (strain ATCC 55618 / DSM 22257 / CCUG 43843 / 130Z).